Consider the following 266-residue polypeptide: MNKPIGVIDSGVGGLTVAKEIMRQLPNETIYYLGDIGRCPYGPRPGEQVKQYTVEIARKLMEFDIKMLVIACNTATAVALEYLQKTLSIPVIGVIEPGARTAIMTTRNQNVLVLGTEGTIKSEAYRTHIKRINPHVEVHGVACPGFVPLVEQMRYSDPTITSIVIHQTLKRWRNSESDTVILGCTHYPLLYKPIYDYFGGKKTVISSGLETAREVSALLTFSNEHASYTEHPDHRFFATGDTTHITNIIKEWLNLSVNVERISVND.

Residues 9 to 10 and 41 to 42 contribute to the substrate site; these read DS and YG. The Proton donor/acceptor role is filled by C72. 73–74 is a substrate binding site; sequence NT. Residue C184 is the Proton donor/acceptor of the active site. 185–186 is a substrate binding site; it reads TH.

Belongs to the aspartate/glutamate racemases family. As to quaternary structure, homodimer.

The enzyme catalyses L-glutamate = D-glutamate. It functions in the pathway cell wall biogenesis; peptidoglycan biosynthesis. Its function is as follows. Provides the (R)-glutamate required for cell wall biosynthesis. This Staphylococcus aureus (strain MRSA252) protein is Glutamate racemase.